The following is a 212-amino-acid chain: ATP phosphoribosyltransferase (212 aa).

Belongs to the ATP phosphoribosyltransferase family. Short subfamily. In terms of assembly, heteromultimer composed of HisG and HisZ subunits.

The protein resides in the cytoplasm. The catalysed reaction is 1-(5-phospho-beta-D-ribosyl)-ATP + diphosphate = 5-phospho-alpha-D-ribose 1-diphosphate + ATP. The protein operates within amino-acid biosynthesis; L-histidine biosynthesis; L-histidine from 5-phospho-alpha-D-ribose 1-diphosphate: step 1/9. Functionally, catalyzes the condensation of ATP and 5-phosphoribose 1-diphosphate to form N'-(5'-phosphoribosyl)-ATP (PR-ATP). Has a crucial role in the pathway because the rate of histidine biosynthesis seems to be controlled primarily by regulation of HisG enzymatic activity. This Halalkalibacterium halodurans (strain ATCC BAA-125 / DSM 18197 / FERM 7344 / JCM 9153 / C-125) (Bacillus halodurans) protein is ATP phosphoribosyltransferase (hisG).